The sequence spans 101 residues: U-scoloptoxin(10)-Sm2a (101 aa).

Positions 1–23 (MNKSMIILCAVLFLTYIIEENEA) are cleaved as a signal peptide.

This sequence belongs to the scoloptoxin-10 family. Contains 3 disulfide bonds. In terms of tissue distribution, expressed by the venom gland.

It localises to the secreted. The chain is U-scoloptoxin(10)-Sm2a from Scolopendra morsitans (Tanzanian blue ringleg centipede).